Here is a 405-residue protein sequence, read N- to C-terminus: Protein PAG1 (405 aa).

The first 50 residues, 1–50 (MVSLIILFRLTFAIANRVRTLMKVLVIVSFFVLTGSASADSGALSLSGAA), serve as a signal peptide directing secretion. N-linked (GlcNAc...) asparagine glycans are attached at residues Asn55, Asn104, Asn256, and Asn351. Ala391 carries GPI-anchor amidated alanine lipidation. The propeptide at 392–405 (DSLRRTLALLFLLF) is removed in mature form.

It is found in the cell membrane. The protein is Protein PAG1 (PAG1) of Trypanosoma brucei brucei.